The chain runs to 263 residues: 5'-nucleotidase SurE (263 aa).

Positions 11, 12, 42, and 96 each coordinate a divalent metal cation.

This sequence belongs to the SurE nucleotidase family. It depends on a divalent metal cation as a cofactor.

The protein resides in the cytoplasm. The catalysed reaction is a ribonucleoside 5'-phosphate + H2O = a ribonucleoside + phosphate. Nucleotidase that shows phosphatase activity on nucleoside 5'-monophosphates. This is 5'-nucleotidase SurE from Methanocorpusculum labreanum (strain ATCC 43576 / DSM 4855 / Z).